Here is a 198-residue protein sequence, read N- to C-terminus: Holliday junction branch migration complex subunit RuvA (198 aa).

Residues Met1–Lys61 form a domain I region. Residues Thr62–Lys139 form a domain II region. Residues Phe140–Thr144 form a flexible linker region. The segment at Thr144–Thr198 is domain III.

Belongs to the RuvA family. In terms of assembly, homotetramer. Forms an RuvA(8)-RuvB(12)-Holliday junction (HJ) complex. HJ DNA is sandwiched between 2 RuvA tetramers; dsDNA enters through RuvA and exits via RuvB. An RuvB hexamer assembles on each DNA strand where it exits the tetramer. Each RuvB hexamer is contacted by two RuvA subunits (via domain III) on 2 adjacent RuvB subunits; this complex drives branch migration. In the full resolvosome a probable DNA-RuvA(4)-RuvB(12)-RuvC(2) complex forms which resolves the HJ.

Its subcellular location is the cytoplasm. The RuvA-RuvB-RuvC complex processes Holliday junction (HJ) DNA during genetic recombination and DNA repair, while the RuvA-RuvB complex plays an important role in the rescue of blocked DNA replication forks via replication fork reversal (RFR). RuvA specifically binds to HJ cruciform DNA, conferring on it an open structure. The RuvB hexamer acts as an ATP-dependent pump, pulling dsDNA into and through the RuvAB complex. HJ branch migration allows RuvC to scan DNA until it finds its consensus sequence, where it cleaves and resolves the cruciform DNA. This chain is Holliday junction branch migration complex subunit RuvA, found in Mycoplasmopsis synoviae (strain 53) (Mycoplasma synoviae).